Here is a 301-residue protein sequence, read N- to C-terminus: Ubiquinone biosynthesis protein COQ4, mitochondrial (301 aa).

The transit peptide at 1 to 46 (MEVTLKRSAALARQTTPLLRPLRPVATYPSNNNNNNNPTPQQRRPY) directs the protein to the mitochondrion. Residues 14 to 48 (QTTPLLRPLRPVATYPSNNNNNNNPTPQQRRPYSL) form a disordered region. Residues 38-48 (PTPQQRRPYSL) show a composition bias toward polar residues. H185, D186, H189, and E201 together coordinate Zn(2+).

Belongs to the COQ4 family. In terms of assembly, component of a multi-subunit COQ enzyme complex, composed of at least COQ3, COQ4, COQ5, COQ6, COQ7 and COQ9. It depends on Zn(2+) as a cofactor.

The protein localises to the mitochondrion inner membrane. The catalysed reaction is a 4-hydroxy-3-methoxy-5-(all-trans-polyprenyl)benzoate + H(+) = a 2-methoxy-6-(all-trans-polyprenyl)phenol + CO2. Its pathway is cofactor biosynthesis; ubiquinone biosynthesis. Functionally, lyase that catalyzes the C1-decarboxylation of 4-hydroxy-3-methoxy-5-(all-trans-polyprenyl)benzoic acid into 2-methoxy-6-(all-trans-polyprenyl)phenol during ubiquinone biosynthesis. The polypeptide is Ubiquinone biosynthesis protein COQ4, mitochondrial (Podospora anserina (strain S / ATCC MYA-4624 / DSM 980 / FGSC 10383) (Pleurage anserina)).